The primary structure comprises 558 residues: Deleted in azoospermia protein 2 (558 aa).

Polar residues predominate over residues 1 to 10 (MSAANPETPN). Residues 1-27 (MSAANPETPNSTISREASTQSSSAAAS) are disordered. The span at 11 to 27 (STISREASTQSSSAAAS) shows a compositional bias: low complexity. The 76-residue stretch at 40–115 (NTVFVGGIDA…KKLKLGPAIR (76 aa)) folds into the RRM domain. DAZ domains are found at residues 167-190 (AYSA…YNYQ), 191-214 (EYPT…YNYQ), 215-238 (PFPA…YNYQ), 239-262 (AFPA…YNYQ), 263-286 (PFPA…YNYQ), 287-310 (AFPA…YNYQ), 311-334 (AFPA…YNYQ), 335-358 (AFPA…YNYQ), 359-382 (AFPA…YNYQ), 383-406 (AFPA…YNYQ), 407-430 (AFPA…YNYQ), 431-454 (AFPA…YNYQ), 455-478 (AFPA…YNYQ), 479-502 (AFPA…YNYQ), and 503-526 (AFPA…YNYQ).

Belongs to the RRM DAZ family. As to quaternary structure, forms a heterodimer with BOLL and DAZL. Interacts with PUM2, DAZAP1, DAZAP2, DZIP1 and DZIP3. In terms of tissue distribution, testis specific.

The protein localises to the cytoplasm. Its subcellular location is the nucleus. Functionally, RNA-binding protein that plays an essential role in spermatogenesis. May act by binding to the 3'-UTR of mRNAs and regulating their translation. This is Deleted in azoospermia protein 2 (DAZ2) from Homo sapiens (Human).